We begin with the raw amino-acid sequence, 20 residues long: MDXKXYVDLKERFLRYVKFN.

The protein belongs to the peptidase M20B family. It depends on Zn(2+) as a cofactor. Requires Co(2+) as cofactor.

The protein localises to the cell envelope. The catalysed reaction is Release of the N-terminal residue from a tripeptide.. Its activity is regulated as follows. Inhibited by the chelating agents EDTA and 1,10-phenanthroline, by bestatin and amastatin, p-hydroxymercuribenzoate and some divalent cations at high concentration. Its function is as follows. Cleaves a wide range of dipeptides and tripeptides, but does not display activity against larger peptides. May have a role in the survival of F.nucleatum in the subgingival environment of the mouth. This is Peptidase T (pepT) from Fusobacterium nucleatum subsp. polymorphum (Fusobacterium polymorphum).